A 1291-amino-acid polypeptide reads, in one-letter code: Period circadian protein homolog 1 (1291 aa).

Residues 1-134 are disordered; sequence MSGPLEGADG…SSEQSARART (134 aa). Residues 1-151 form an interaction with BTRC region; it reads MSGPLEGADG…LRELKLRLPP (151 aa). Low complexity predominate over residues 48–115; sequence NSNGSSGNES…AYSLLSASSE (68 aa). The segment covering 116-132 has biased composition (polar residues); the sequence is QDNPSTSGCSSEQSARA. T121 carries the phosphothreonine; by CSNK1E modification. S122 and S126 each carry phosphoserine; by CSNK1E. A Nuclear export signal 1 motif is present at residues 138–147; sequence LMTALRELKL. 2 consecutive PAS domains span residues 208-275 and 348-414; these read ITSE…PSRL and YEAP…KILQ. Positions 422–465 constitute a PAC domain; it reads HSPIRFCARNGEYVTMDTSWAGFVHPWSRKVAFVLGRHKVRTAP. Residues 489 to 498 carry the Nuclear export signal 2 motif; that stretch reads LSEQIHRLLL. 2 disordered regions span residues 508–544 and 647–698; these read GLCG…PAPV and TKRK…KEPV. Low complexity-rich tracts occupy residues 513 to 533 and 652 to 662; these read GPLM…SNGG and ASSSSYTASSA. Residues 596-815 are required for phosphorylation by CSNK1E; the sequence is ELEVAPVPDQ…GLDTSSVAPS (220 aa). A phosphoserine mark is found at S661, S663, and S704. 3 disordered regions span residues 749 to 772, 809 to 873, and 938 to 1037; these read GLAP…TPDA, TSSV…PPAT, and SQAP…ALSG. The span at 751 to 769 shows a compositional bias: pro residues; sequence APGPAPSPAPSPTVAPDPT. S815 is modified (phosphoserine). The short motif at 824 to 840 is the Nuclear localization signal element; it reads IPPGRRHHCRSKAKRSR. Over residues 827-846 the composition is skewed to basic residues; that stretch reads GRRHHCRSKAKRSRHHHHQT. Pro residues-rich tracts occupy residues 859-873 and 955-965; these read SPVP…PPAT and PSLPPPPLSPP. Polar residues predominate over residues 973 to 985; sequence FNSRCSSPLQLNL. A phosphoserine mark is found at S978 and S979. Residues 981-988 carry the Nuclear export signal 3 motif; the sequence is LQLNLLQL. The LXXLL signature appears at 1042-1046; it reads LELLL. The span at 1051-1061 shows a compositional bias: low complexity; the sequence is RSGTGSAASGS. Disordered regions lie at residues 1051-1099 and 1207-1291; these read RSGT…YFGS and SVQD…NSTS. Positions 1062 to 1076 are enriched in gly residues; that stretch reads LGSGLGSGSGSGSHE. Over residues 1077–1094 the composition is skewed to low complexity; that stretch reads GGSTSASITRSSQSSHTS. The interval 1148–1291 is CRY binding domain; that stretch reads SRDAASVLKQ…ALPAEENSTS (144 aa). Over residues 1235–1248 the composition is skewed to gly residues; the sequence is GEGGGCGVGGGGGD. The segment covering 1253–1267 has biased composition (polar residues); that stretch reads AQTQIGAKGSSSQDS.

Homodimer. Component of the circadian core oscillator, which includes the CRY proteins, CLOCK or NPAS2, BMAL1 or BMAL2, CSNK1D and/or CSNK1E, TIMELESS, and the PER proteins. Interacts directly with TIMELESS. Interacts directly with PER2, PER3, CRY1 and CRY2. Interacts with BMAL1 and CLOCK. Interacts with GPRASP1. Interacts (phosphorylated) with BTRC and FBXW11; the interactions trigger proteasomal degradation. Interacts with NONO and SFPQ. Interacts with WDR5. Interacts with U2AF1L4 (Isoform 3). Interacts with USP2. Interacts with HNF4A. Post-translationally, phosphorylated on serine residues by CSNK1D, CSNK1E and probably also by CSNK1G2. Phosphorylation by CSNK1D or CSNK1E promotes nuclear location of PER proteins as well as ubiquitination and subsequent degradation. May be dephosphorylated by PP1. In terms of processing, ubiquitinated; requires phosphorylation by CSNK1E and interaction with BTRC and FBXW11. Deubiquitinated by USP2. In terms of tissue distribution, in brain, highest expression is observed in the SCN. Highly expressed in the pyramidal cell layer of the piriform cortex, the periventricular part of the caudate-putamen, many thalamic nuclei, and the granular layer of the cerebellar cortex. Weaker expression is detected in most area of the brain, including cortical and non cortical structures. Expression but no oscillations occurs in the glomerular and mitral cell layers of the olfactory bulb, the internal granular layer of the cerebellum, the cornu ammonis and dentate gyrus of the hippocampus, the cerebral and piriform cortices. Expressed in the renal cortex (at protein level). Also found in heart, brain, bladder, lumbar spinal cord, spleen, lung, liver, skeletal muscle and testis.

The protein localises to the nucleus. The protein resides in the cytoplasm. Its function is as follows. Transcriptional repressor which forms a core component of the circadian clock. The circadian clock, an internal time-keeping system, regulates various physiological processes through the generation of approximately 24 hour circadian rhythms in gene expression, which are translated into rhythms in metabolism and behavior. It is derived from the Latin roots 'circa' (about) and 'diem' (day) and acts as an important regulator of a wide array of physiological functions including metabolism, sleep, body temperature, blood pressure, endocrine, immune, cardiovascular, and renal function. Consists of two major components: the central clock, residing in the suprachiasmatic nucleus (SCN) of the brain, and the peripheral clocks that are present in nearly every tissue and organ system. Both the central and peripheral clocks can be reset by environmental cues, also known as Zeitgebers (German for 'timegivers'). The predominant Zeitgeber for the central clock is light, which is sensed by retina and signals directly to the SCN. The central clock entrains the peripheral clocks through neuronal and hormonal signals, body temperature and feeding-related cues, aligning all clocks with the external light/dark cycle. Circadian rhythms allow an organism to achieve temporal homeostasis with its environment at the molecular level by regulating gene expression to create a peak of protein expression once every 24 hours to control when a particular physiological process is most active with respect to the solar day. Transcription and translation of core clock components (CLOCK, NPAS2, BMAL1, BMAL2, PER1, PER2, PER3, CRY1 and CRY2) plays a critical role in rhythm generation, whereas delays imposed by post-translational modifications (PTMs) are important for determining the period (tau) of the rhythms (tau refers to the period of a rhythm and is the length, in time, of one complete cycle). A diurnal rhythm is synchronized with the day/night cycle, while the ultradian and infradian rhythms have a period shorter and longer than 24 hours, respectively. Disruptions in the circadian rhythms contribute to the pathology of cardiovascular diseases, cancer, metabolic syndromes and aging. A transcription/translation feedback loop (TTFL) forms the core of the molecular circadian clock mechanism. Transcription factors, CLOCK or NPAS2 and BMAL1 or BMAL2, form the positive limb of the feedback loop, act in the form of a heterodimer and activate the transcription of core clock genes and clock-controlled genes (involved in key metabolic processes), harboring E-box elements (5'-CACGTG-3') within their promoters. The core clock genes: PER1/2/3 and CRY1/2 which are transcriptional repressors form the negative limb of the feedback loop and interact with the CLOCK|NPAS2-BMAL1|BMAL2 heterodimer inhibiting its activity and thereby negatively regulating their own expression. This heterodimer also activates nuclear receptors NR1D1/2 and RORA/B/G, which form a second feedback loop and which activate and repress BMAL1 transcription, respectively. Regulates circadian target genes expression at post-transcriptional levels, but may not be required for the repression at transcriptional level. Controls PER2 protein decay. Represses CRY2 preventing its repression on CLOCK/BMAL1 target genes such as FXYD5 and SCNN1A in kidney and PPARA in liver. Besides its involvement in the maintenance of the circadian clock, has an important function in the regulation of several processes. Participates in the repression of glucocorticoid receptor NR3C1/GR-induced transcriptional activity by reducing the association of NR3C1/GR to glucocorticoid response elements (GREs) by BMAL1:CLOCK. Plays a role in the modulation of the neuroinflammatory state via the regulation of inflammatory mediators release, such as CCL2 and IL6. In spinal astrocytes, negatively regulates the MAPK14/p38 and MAPK8/JNK MAPK cascades as well as the subsequent activation of NFkappaB. Coordinately regulates the expression of multiple genes that are involved in the regulation of renal sodium reabsorption. Can act as gene expression activator in a gene and tissue specific manner, in kidney enhances WNK1 and SLC12A3 expression in collaboration with CLOCK. Modulates hair follicle cycling. Represses the CLOCK-BMAL1 induced transcription of BHLHE40/DEC1. The sequence is that of Period circadian protein homolog 1 (Per1) from Mus musculus (Mouse).